The sequence spans 81 residues: RNA-binding protein Hfq (81 aa).

Residues Asp10–Val69 form the Sm domain.

It belongs to the Hfq family. Homohexamer.

Functionally, RNA chaperone that binds small regulatory RNA (sRNAs) and mRNAs to facilitate mRNA translational regulation in response to envelope stress, environmental stress and changes in metabolite concentrations. Also binds with high specificity to tRNAs. The polypeptide is RNA-binding protein Hfq (Nitrosospira multiformis (strain ATCC 25196 / NCIMB 11849 / C 71)).